We begin with the raw amino-acid sequence, 1036 residues long: Non-canonical non-ribosomal peptide synthetase FUB8 (1036 aa).

An adenylation (A) domain region spans residues 21-343; it reads EIARDEPDRV…LASVVTHPDE (323 aa). Residues 544-621 form the Carrier domain; that stretch reads TTEDVVRSGI…QLAHTVWSHL (78 aa). Residue Ser-579 is modified to O-(pantetheine 4'-phosphoryl)serine. The segment at 658–899 is thioester reductase (TR) domain; that stretch reads LTGTTGEIGS…IPIDLLTEVI (242 aa).

It participates in mycotoxin biosynthesis. Functionally, non-canonical non-ribosomal peptide synthetase; part of the gene cluster that mediates the biosynthesis of fusaric acid, a mycotoxin with low to moderate toxicity to animals and humans, but with high phytotoxic properties. L-aspartate is suggested as fusaric acid amino acid precursor that is activated and further processed to O-acetyl-L-homoserine by cluster enzymes aspartate kinase FUB3 and homoserine O-acetyltransferase FUB5, as well as enzymes of the primary metabolism. The polyketide synthase (PKS) FUB1 generates the triketide trans-2-hexenal which is presumptively released by the hydrolase FUB4 and linked to the NRPS-bound amino acid precursor by NAD(P)-dependent dehydrogenase FUB6. FUB1, FUB4, and the non-canonical NRPS Fub8 may form an enzyme complex. Further processing of the NRPS-bound intermediate might be carried out by FUB6 and the sulfhydrylase FUB7, enabling a spontaneous electrocyclization to close the carbon backbone of fusaric acid. Dihydrofusaric acid is likely to be released via reduction by the thioester reductase (TR) domain of FUB8 whereupon the final oxidation to fusaric acid may (also) be performed by the FMN-dependent dehydrogenase FUB9. This is Non-canonical non-ribosomal peptide synthetase FUB8 from Fusarium oxysporum f. sp. lycopersici (strain 4287 / CBS 123668 / FGSC 9935 / NRRL 34936) (Fusarium vascular wilt of tomato).